Reading from the N-terminus, the 80-residue chain is Acyl carrier protein (80 aa).

One can recognise a Carrier domain in the interval 4-79 (EEIKDKVFDI…QAIDYIVNAK (76 aa)). S39 carries the post-translational modification O-(pantetheine 4'-phosphoryl)serine.

This sequence belongs to the acyl carrier protein (ACP) family. In terms of processing, 4'-phosphopantetheine is transferred from CoA to a specific serine of apo-ACP by AcpS. This modification is essential for activity because fatty acids are bound in thioester linkage to the sulfhydryl of the prosthetic group.

The protein resides in the cytoplasm. Its pathway is lipid metabolism; fatty acid biosynthesis. Functionally, carrier of the growing fatty acid chain in fatty acid biosynthesis. The sequence is that of Acyl carrier protein from Prosthecochloris aestuarii (strain DSM 271 / SK 413).